A 169-amino-acid chain; its full sequence is MLYSKKKEFVKFLEGIYKNANTIVAIHYHGLTVAQLTQIRKDLRVSGARLKIVKNTLAKIAVANLKIKQADIFSGPIAIAYSEDYITVPKVILRFADQYPSLKVVGGFVDQKVATMNDIEQLASLATSESHKGNFLSLLQIPIRRFATVSHAPLVKLVTILKNYVNNKS.

It belongs to the universal ribosomal protein uL10 family. Part of the ribosomal stalk of the 50S ribosomal subunit. The N-terminus interacts with L11 and the large rRNA to form the base of the stalk. The C-terminus forms an elongated spine to which L12 dimers bind in a sequential fashion forming a multimeric L10(L12)X complex.

Its function is as follows. Forms part of the ribosomal stalk, playing a central role in the interaction of the ribosome with GTP-bound translation factors. The protein is Large ribosomal subunit protein uL10 of Orientia tsutsugamushi (strain Boryong) (Rickettsia tsutsugamushi).